The chain runs to 309 residues: Sulfate adenylyltransferase subunit 2 (309 aa).

The protein belongs to the PAPS reductase family. CysD subfamily. In terms of assembly, heterodimer composed of CysD, the smaller subunit, and CysN.

It catalyses the reaction sulfate + ATP + H(+) = adenosine 5'-phosphosulfate + diphosphate. Its pathway is sulfur metabolism; hydrogen sulfide biosynthesis; sulfite from sulfate: step 1/3. In terms of biological role, with CysN forms the ATP sulfurylase (ATPS) that catalyzes the adenylation of sulfate producing adenosine 5'-phosphosulfate (APS) and diphosphate, the first enzymatic step in sulfur assimilation pathway. APS synthesis involves the formation of a high-energy phosphoric-sulfuric acid anhydride bond driven by GTP hydrolysis by CysN coupled to ATP hydrolysis by CysD. This chain is Sulfate adenylyltransferase subunit 2, found in Aeromonas salmonicida (strain A449).